Consider the following 322-residue polypeptide: Acetyl-coenzyme A carboxylase carboxyl transferase subunit alpha (322 aa).

In terms of domain architecture, CoA carboxyltransferase C-terminal spans arginine 39 to glutamine 293.

This sequence belongs to the AccA family. Acetyl-CoA carboxylase is a heterohexamer composed of biotin carboxyl carrier protein (AccB), biotin carboxylase (AccC) and two subunits each of ACCase subunit alpha (AccA) and ACCase subunit beta (AccD).

It localises to the cytoplasm. It carries out the reaction N(6)-carboxybiotinyl-L-lysyl-[protein] + acetyl-CoA = N(6)-biotinyl-L-lysyl-[protein] + malonyl-CoA. The protein operates within lipid metabolism; malonyl-CoA biosynthesis; malonyl-CoA from acetyl-CoA: step 1/1. Functionally, component of the acetyl coenzyme A carboxylase (ACC) complex. First, biotin carboxylase catalyzes the carboxylation of biotin on its carrier protein (BCCP) and then the CO(2) group is transferred by the carboxyltransferase to acetyl-CoA to form malonyl-CoA. This chain is Acetyl-coenzyme A carboxylase carboxyl transferase subunit alpha, found in Ralstonia nicotianae (strain ATCC BAA-1114 / GMI1000) (Ralstonia solanacearum).